A 431-amino-acid chain; its full sequence is Glucose-6-phosphate isomerase (431 aa).

Residue Glu-284 is the Proton donor of the active site. Active-site residues include His-305 and Lys-420.

It belongs to the GPI family.

It is found in the cytoplasm. The catalysed reaction is alpha-D-glucose 6-phosphate = beta-D-fructose 6-phosphate. Its pathway is carbohydrate biosynthesis; gluconeogenesis. The protein operates within carbohydrate degradation; glycolysis; D-glyceraldehyde 3-phosphate and glycerone phosphate from D-glucose: step 2/4. Functionally, catalyzes the reversible isomerization of glucose-6-phosphate to fructose-6-phosphate. In Mycoplasma genitalium (strain ATCC 33530 / DSM 19775 / NCTC 10195 / G37) (Mycoplasmoides genitalium), this protein is Glucose-6-phosphate isomerase.